The chain runs to 306 residues: UDP-N-acetylenolpyruvoylglucosamine reductase (306 aa).

The FAD-binding PCMH-type domain occupies 29–193 (RVGGPADWLF…IRASLRGTPD (165 aa)). R173 is an active-site residue. S222 acts as the Proton donor in catalysis. The active site involves E292.

Belongs to the MurB family. It depends on FAD as a cofactor.

The protein localises to the cytoplasm. The catalysed reaction is UDP-N-acetyl-alpha-D-muramate + NADP(+) = UDP-N-acetyl-3-O-(1-carboxyvinyl)-alpha-D-glucosamine + NADPH + H(+). It participates in cell wall biogenesis; peptidoglycan biosynthesis. Its function is as follows. Cell wall formation. This is UDP-N-acetylenolpyruvoylglucosamine reductase from Gluconobacter oxydans (strain 621H) (Gluconobacter suboxydans).